A 530-amino-acid chain; its full sequence is Potassium voltage-gated channel subfamily A member 6 (530 aa).

Residues 1 to 35 are disordered; sequence MRSEKSLTLAAPGEVRGPEGEQQDAGEFQEAEGGG. Ser3 carries the phosphoserine modification. Positions 21–30 are enriched in acidic residues; the sequence is EQQDAGEFQE. A helical transmembrane segment spans residues 172–193; the sequence is PARGIAIVSVLVILISIVIFCL. The segment at 203 to 239 is disordered; the sequence is GRGGSNEGSGTRMSPASRGSHEEEDEDEDSYAFPGSI. Position 222 is a phosphoserine; by CK2 (Ser222). The chain crosses the membrane as a helical span at residues 264–285; sequence FFLVETLCIVWFTFELLVRFSA. A lipid anchor (S-palmitoyl cysteine) is attached at Cys286. Residues 297–317 form a helical membrane-spanning segment; sequence MNIIDLVAIFPYFITLGTELV. A helical; Voltage-sensor transmembrane segment spans residues 339–359; it reads LAILRVIRLVRVFRIFKLSRH. The tract at residues 361-374 is S4-S5 linker; it reads KGLQILGKTLQASM. A helical membrane pass occupies residues 375–396; it reads RELGLLIFFLFIGVILFSSAVY. Positions 411–422 form an intramembrane region, helical; it reads PDAFWWAVVTMT. The Selectivity filter signature appears at 423–428; the sequence is TVGYGD. The stretch at 423-430 is an intramembrane region; it reads TVGYGDMY. The helical transmembrane segment at 438–466 threads the bilayer; that stretch reads IVGSLCAIAGVLTIALPVPVIVSNFNYFY. A Phosphoserine; by PKA modification is found at Ser512. The PDZ-binding signature appears at 527–529; sequence LTE. Thr528 carries the post-translational modification Phosphothreonine; by PKA.

It belongs to the potassium channel family. A (Shaker) (TC 1.A.1.2) subfamily. Kv1.6/KCNA6 sub-subfamily. In terms of assembly, homotetramer and heterotetramer of potassium channel proteins. Interacts with KCNAB1 and KCNAB2.

Its subcellular location is the cell membrane. The enzyme catalyses K(+)(in) = K(+)(out). Voltage-gated potassium channel that mediates transmembrane potassium transport in excitable membranes. Forms tetrameric potassium-selective channels through which potassium ions pass in accordance with their electrochemical gradient. The channel alternates between opened and closed conformations in response to the voltage difference across the membrane. Can form functional homotetrameric channels and heterotetrameric channels that contain variable proportions of KCNA1, KCNA2, KCNA4, KNCA5, KCNA6, and possibly other family members as well; channel properties depend on the type of alpha subunits that are part of the channel. Channel properties are modulated by cytoplasmic beta subunits that regulate the subcellular location of the alpha subunits and promote rapid inactivation. Homotetrameric channels display rapid activation and slow inactivation. This Rattus norvegicus (Rat) protein is Potassium voltage-gated channel subfamily A member 6 (Kcna6).